The primary structure comprises 217 residues: Homologous-pairing protein 2 homolog (217 aa).

A coiled-coil region spans residues 93-153; the sequence is IVALTAKVQS…LKNIKAATNH (61 aa). Positions 118 to 182 are DNA-binding; that stretch reads SSALTTPEMQ…WRKRKRMATE (65 aa).

This sequence belongs to the HOP2 family. Interacts with the DNA-binding domain of the nuclear receptors NR3C1/GR, ESR2/ER-beta, THRB and RXRA. Forms a stable heterodimer with MND1. Interacts with PSMC3/TBP1. Post-translationally, PTM: Phosphorylated by PKA, PKC and MAPK. In terms of tissue distribution, highly expressed in testis and colon.

It localises to the nucleus. Plays an important role in meiotic recombination. Stimulates DMC1-mediated strand exchange required for pairing homologous chromosomes during meiosis. The complex PSMC3IP/MND1 binds DNA, stimulates the recombinase activity of DMC1 as well as DMC1 D-loop formation from double-strand DNA. This complex stabilizes presynaptic RAD51 and DMC1 filaments formed on single strand DNA to capture double-strand DNA. This complex stimulates both synaptic and presynaptic critical steps in RAD51 and DMC1-promoted homologous pairing. May inhibit HIV-1 viral protein TAT activity and modulate the activity of proteasomes through association with PSMC3. Acts as a tissue specific coactivator of hormone-dependent transcription mediated by nuclear receptors. This chain is Homologous-pairing protein 2 homolog (PSMC3IP), found in Homo sapiens (Human).